A 201-amino-acid chain; its full sequence is 7-methyl-GTP pyrophosphatase (201 aa).

The active-site Proton acceptor is the Asp-73.

Belongs to the Maf family. YceF subfamily. The cofactor is a divalent metal cation.

It localises to the cytoplasm. The enzyme catalyses N(7)-methyl-GTP + H2O = N(7)-methyl-GMP + diphosphate + H(+). Its function is as follows. Nucleoside triphosphate pyrophosphatase that hydrolyzes 7-methyl-GTP (m(7)GTP). May have a dual role in cell division arrest and in preventing the incorporation of modified nucleotides into cellular nucleic acids. The chain is 7-methyl-GTP pyrophosphatase from Thiobacillus denitrificans (strain ATCC 25259 / T1).